The primary structure comprises 355 residues: Protein MGF 360-3L (355 aa).

An ANK repeat occupies 60-92 (KLNTALVLAVKENNYDLIVLFTEWGANINYALL).

The protein belongs to the asfivirus MGF 360 family.

Its function is as follows. Plays a role in virus cell tropism, and may be required for efficient virus replication in macrophages. The polypeptide is Protein MGF 360-3L (Ornithodoros (relapsing fever ticks)).